Reading from the N-terminus, the 202-residue chain is Small ribosomal subunit protein uS4 (202 aa).

Positions 15 to 42 (LGDLPGLTRKAAKRSYPPGQHGQARRKR) are disordered. One can recognise an S4 RNA-binding domain in the interval 90–152 (SRLDNICFRL…KGSKQLAEGN (63 aa)).

This sequence belongs to the universal ribosomal protein uS4 family. In terms of assembly, part of the 30S ribosomal subunit. Contacts protein S5. The interaction surface between S4 and S5 is involved in control of translational fidelity.

Functionally, one of the primary rRNA binding proteins, it binds directly to 16S rRNA where it nucleates assembly of the body of the 30S subunit. In terms of biological role, with S5 and S12 plays an important role in translational accuracy. This Synechococcus sp. (strain CC9902) protein is Small ribosomal subunit protein uS4.